The sequence spans 130 residues: Small ribosomal subunit protein uS9 (130 aa).

This sequence belongs to the universal ribosomal protein uS9 family.

In Oceanobacillus iheyensis (strain DSM 14371 / CIP 107618 / JCM 11309 / KCTC 3954 / HTE831), this protein is Small ribosomal subunit protein uS9.